The following is a 374-amino-acid chain: Formylglycine-generating enzyme (374 aa).

A signal peptide spans 1–33 (MAAPALGPARGCGAELTLVLLLSLFLLLGWAAG). Cys-50 and Cys-52 are oxidised to a cystine. A disordered region spans residues 57–102 (RPGAQGSSAAAHRYSREANAPGSVPGGRPSPPTKMVPIPAGVFTMG). Glu-130 is a binding site for Ca(2+). Asn-141 carries N-linked (GlcNAc...) asparagine glycosylation. Cystine bridges form between Cys-218–Cys-365 and Cys-235–Cys-346. Residues Asn-259, Ile-260, Asp-273, Phe-275, Asn-293, Gly-296, Ala-298, and Glu-300 each contribute to the Ca(2+) site. 2 residues coordinate Cu(2+): Cys-336 and Cys-341. The tract at residues 341-360 (CYRYRCAARSQNTPDSSASN) is interaction with sulfatases.

This sequence belongs to the sulfatase-modifying factor family. As to quaternary structure, monomer, homodimer and heterodimer with SUMF2. Cu(2+) serves as cofactor. N-glycosylated. Contains high-mannose-type oligosaccharides.

It localises to the endoplasmic reticulum lumen. The enzyme catalyses L-cysteinyl-[sulfatase] + 2 a thiol + O2 = an organic disulfide + 3-oxo-L-alanyl-[sulfatase] + hydrogen sulfide + H2O + H(+). It functions in the pathway protein modification; sulfatase oxidation. Functionally, oxidase that catalyzes the conversion of cysteine to 3-oxoalanine on target proteins, using molecular oxygen and an unidentified reducing agent. 3-oxoalanine modification, which is also named formylglycine (fGly), occurs in the maturation of arylsulfatases and some alkaline phosphatases that use the hydrated form of 3-oxoalanine as a catalytic nucleophile. Known substrates include GALNS, ARSA, STS and ARSE. The chain is Formylglycine-generating enzyme from Bos taurus (Bovine).